The sequence spans 720 residues: Probable ATP-dependent RNA helicase DHX35 (720 aa).

A Helicase ATP-binding domain is found at 64-229 (LYLIENYQTV…FNQNETSDPA (166 aa)). Residue 77–84 (GETGCGKS) coordinates ATP. The DEAH box signature appears at 176–179 (DEAH). The Helicase C-terminal domain maps to 261-438 (TVETVVKIHQ…PVILQLKALG (178 aa)).

It belongs to the DEAD box helicase family. DEAH subfamily. In terms of assembly, identified in the spliceosome C complex.

It carries out the reaction ATP + H2O = ADP + phosphate + H(+). Functionally, may be involved in pre-mRNA splicing. The polypeptide is Probable ATP-dependent RNA helicase DHX35 (DHX35) (Pongo abelii (Sumatran orangutan)).